Consider the following 1074-residue polypeptide: Phospholipase D1 (1074 aa).

The 132-residue stretch at I81 to S212 folds into the PX domain. In terms of domain architecture, PH spans P219–Q328. 2 S-palmitoyl cysteine lipidation sites follow: C240 and C241. Residues Y459–R486 form the PLD phosphodiesterase 1 domain. The segment at H463–A928 is catalytic. Residues S499, S561, and S629 each carry the phosphoserine modification. One can recognise a PLD phosphodiesterase 2 domain in the interval E891–S918.

Belongs to the phospholipase D family. In terms of assembly, interacts with PIP5K1B. Expressed abundantly in the pancreas and heart and at high levels in brain, placenta, spleen, uterus and small intestine.

It is found in the cytoplasm. It localises to the perinuclear region. The protein resides in the endoplasmic reticulum membrane. The protein localises to the golgi apparatus membrane. Its subcellular location is the late endosome membrane. The enzyme catalyses a 1,2-diacyl-sn-glycero-3-phosphocholine + H2O = a 1,2-diacyl-sn-glycero-3-phosphate + choline + H(+). The catalysed reaction is ethanol + a 1,2-diacyl-sn-glycero-3-phosphocholine = 1,2-diacyl-sn-glycero-3-phosphoethanol + choline. It carries out the reaction 1,2-dihexadecanoyl-sn-glycero-3-phosphocholine + H2O = 1,2-dihexadecanoyl-sn-glycero-3-phosphate + choline + H(+). Stimulated by phosphatidylinositol 4,5-bisphosphate and phosphatidylinositol 3,4,5-trisphosphate, activated by the phosphokinase C-alpha, by the ADP-ribosylation factor-1 (ARF-1), and to a lesser extent by GTP-binding proteins: RHO A, RAC-1 and CDC42. Inhibited by oleate. Its function is as follows. Function as phospholipase selective for phosphatidylcholine. Implicated as a critical step in numerous cellular pathways, including signal transduction, membrane trafficking, and the regulation of mitosis. May be involved in the regulation of perinuclear intravesicular membrane traffic. This Homo sapiens (Human) protein is Phospholipase D1.